The primary structure comprises 29 residues: Omega-conotoxins GVIIA/GVIIB (29 aa).

Cystine bridges form between Cys-1-Cys-16, Cys-8-Cys-19, and Cys-15-Cys-26. 4-hydroxyproline occurs at positions 4 and 7.

Expressed by the venom duct.

The protein resides in the secreted. Omega-conotoxins act at presynaptic membranes, they bind and block voltage-gated calcium channels (Cav). The polypeptide is Omega-conotoxins GVIIA/GVIIB (Conus geographus (Geography cone)).